The sequence spans 289 residues: Elongation factor Ts (289 aa).

Residues 82-85 (TDFV) form an involved in Mg(2+) ion dislocation from EF-Tu region.

It belongs to the EF-Ts family.

Its subcellular location is the cytoplasm. In terms of biological role, associates with the EF-Tu.GDP complex and induces the exchange of GDP to GTP. It remains bound to the aminoacyl-tRNA.EF-Tu.GTP complex up to the GTP hydrolysis stage on the ribosome. In Marinobacter nauticus (strain ATCC 700491 / DSM 11845 / VT8) (Marinobacter aquaeolei), this protein is Elongation factor Ts.